Here is a 218-residue protein sequence, read N- to C-terminus: Uracil-DNA glycosylase (218 aa).

The active-site Proton acceptor is the D59.

It belongs to the uracil-DNA glycosylase (UDG) superfamily. UNG family.

Its subcellular location is the cytoplasm. It carries out the reaction Hydrolyzes single-stranded DNA or mismatched double-stranded DNA and polynucleotides, releasing free uracil.. Excises uracil residues from the DNA which can arise as a result of misincorporation of dUMP residues by DNA polymerase or due to deamination of cytosine. The polypeptide is Uracil-DNA glycosylase (Staphylococcus aureus (strain bovine RF122 / ET3-1)).